We begin with the raw amino-acid sequence, 192 residues long: dTTP/UTP pyrophosphatase (192 aa).

Asp70 serves as the catalytic Proton acceptor.

This sequence belongs to the Maf family. YhdE subfamily. Requires a divalent metal cation as cofactor.

Its subcellular location is the cytoplasm. It catalyses the reaction dTTP + H2O = dTMP + diphosphate + H(+). It carries out the reaction UTP + H2O = UMP + diphosphate + H(+). Nucleoside triphosphate pyrophosphatase that hydrolyzes dTTP and UTP. May have a dual role in cell division arrest and in preventing the incorporation of modified nucleotides into cellular nucleic acids. The chain is dTTP/UTP pyrophosphatase from Alkaliphilus oremlandii (strain OhILAs) (Clostridium oremlandii (strain OhILAs)).